A 366-amino-acid chain; its full sequence is Growth hormone secretagogue receptor type 1 (366 aa).

Residues Met1–Ala40 are Extracellular-facing. N-linked (GlcNAc...) asparagine glycosylation is found at Asn3, Asn13, and Asn27. A helical membrane pass occupies residues Pro41–Leu66. Residues Val67–Arg72 are Cytoplasmic-facing. Residues Glu73–Met96 form a helical membrane-spanning segment. Residues Pro97–Lys117 are Extracellular-facing. The cysteines at positions 116 and 198 are disulfide-linked. A helical transmembrane segment spans residues Leu118–Val139. Residues Glu140 to Leu162 lie on the Cytoplasmic side of the membrane. Residues Val163–Gly183 form a helical membrane-spanning segment. Topologically, residues Val184–Thr211 are extracellular. Asn188 is a glycosylation site (N-linked (GlcNAc...) asparagine). Residues Val212–Ile235 form a helical membrane-spanning segment. At Gly236 to Lys263 the chain is on the cytoplasmic side. The helical transmembrane segment at Met264–Leu285 threads the bilayer. The Extracellular segment spans residues Phe286 to Gln302. A helical membrane pass occupies residues Tyr303–Met326. Over Ser327 to Thr366 the chain is Cytoplasmic.

This sequence belongs to the G-protein coupled receptor 1 family.

The protein resides in the cell membrane. In terms of biological role, receptor for ghrelin, coupled to G-alpha-11 proteins. Stimulates growth hormone secretion. Also binds other growth hormone releasing peptides (GHRP) (e.g. Met-enkephalin and GHRP-6) as well as non-peptide, low molecular weight secretagogues (e.g. L-692,429, MK-0677, adenosine). The polypeptide is Growth hormone secretagogue receptor type 1 (GHSR) (Mustela putorius furo (European domestic ferret)).